Consider the following 177-residue polypeptide: Acireductone dioxygenase (177 aa).

Fe(2+)-binding residues include histidine 97, histidine 99, glutamate 103, and histidine 141. Ni(2+) contacts are provided by histidine 97, histidine 99, glutamate 103, and histidine 141.

This sequence belongs to the acireductone dioxygenase (ARD) family. In terms of assembly, monomer. The cofactor is Fe(2+). Requires Ni(2+) as cofactor.

The catalysed reaction is 1,2-dihydroxy-5-(methylsulfanyl)pent-1-en-3-one + O2 = 3-(methylsulfanyl)propanoate + CO + formate + 2 H(+). The enzyme catalyses 1,2-dihydroxy-5-(methylsulfanyl)pent-1-en-3-one + O2 = 4-methylsulfanyl-2-oxobutanoate + formate + 2 H(+). The protein operates within amino-acid biosynthesis; L-methionine biosynthesis via salvage pathway; L-methionine from S-methyl-5-thio-alpha-D-ribose 1-phosphate: step 5/6. Catalyzes 2 different reactions between oxygen and the acireductone 1,2-dihydroxy-3-keto-5-methylthiopentene (DHK-MTPene) depending upon the metal bound in the active site. Fe-containing acireductone dioxygenase (Fe-ARD) produces formate and 2-keto-4-methylthiobutyrate (KMTB), the alpha-ketoacid precursor of methionine in the methionine recycle pathway. Ni-containing acireductone dioxygenase (Ni-ARD) produces methylthiopropionate, carbon monoxide and formate, and does not lie on the methionine recycle pathway. This Leptospira biflexa serovar Patoc (strain Patoc 1 / ATCC 23582 / Paris) protein is Acireductone dioxygenase.